We begin with the raw amino-acid sequence, 346 residues long: UDP-3-O-acylglucosamine N-acyltransferase (346 aa).

His253 functions as the Proton acceptor in the catalytic mechanism.

The protein belongs to the transferase hexapeptide repeat family. LpxD subfamily. Homotrimer.

It catalyses the reaction a UDP-3-O-[(3R)-3-hydroxyacyl]-alpha-D-glucosamine + a (3R)-hydroxyacyl-[ACP] = a UDP-2-N,3-O-bis[(3R)-3-hydroxyacyl]-alpha-D-glucosamine + holo-[ACP] + H(+). It functions in the pathway bacterial outer membrane biogenesis; LPS lipid A biosynthesis. Functionally, catalyzes the N-acylation of UDP-3-O-acylglucosamine using 3-hydroxyacyl-ACP as the acyl donor. Is involved in the biosynthesis of lipid A, a phosphorylated glycolipid that anchors the lipopolysaccharide to the outer membrane of the cell. In Rickettsia akari (strain Hartford), this protein is UDP-3-O-acylglucosamine N-acyltransferase.